We begin with the raw amino-acid sequence, 88 residues long: Phosphocarrier protein HPr (88 aa).

One can recognise an HPr domain in the interval 1–88 (MEKREFNIIA…DTMKKEGLAE (88 aa)). Catalysis depends on H15, which acts as the Pros-phosphohistidine intermediate. S46 bears the Phosphoserine; by HPrK/P mark.

Belongs to the HPr family.

It localises to the cytoplasm. With respect to regulation, phosphorylation on Ser-46 inhibits the phosphoryl transfer from enzyme I to HPr. Functionally, general (non sugar-specific) component of the phosphoenolpyruvate-dependent sugar phosphotransferase system (sugar PTS). This major carbohydrate active-transport system catalyzes the phosphorylation of incoming sugar substrates concomitantly with their translocation across the cell membrane. The phosphoryl group from phosphoenolpyruvate (PEP) is transferred to the phosphoryl carrier protein HPr by enzyme I. Phospho-HPr then transfers it to the PTS EIIA domain. P-Ser-HPr interacts with the catabolite control protein A (CcpA), forming a complex that binds to DNA at the catabolite response elements cre, operator sites preceding a large number of catabolite-regulated genes. Thus, P-Ser-HPr is a corepressor in carbon catabolite repression (CCR), a mechanism that allows bacteria to coordinate and optimize the utilization of available carbon sources. P-Ser-HPr also plays a role in inducer exclusion, in which it probably interacts with several non-PTS permeases and inhibits their transport activity. In Lacticaseibacillus casei (Lactobacillus casei), this protein is Phosphocarrier protein HPr (ptsH).